We begin with the raw amino-acid sequence, 486 residues long: Probable glucan endo-1,3-beta-glucosidase eglC (486 aa).

The signal sequence occupies residues 1–18 (MQLTQLLALALSLATSEA). N-linked (GlcNAc...) asparagine glycosylation is present at N84. Catalysis depends on E128, which acts as the Proton donor. N-linked (GlcNAc...) asparagine glycosylation occurs at N183. The active-site Nucleophile is the E239. N-linked (GlcNAc...) asparagine glycans are attached at residues N315, N386, N396, and N404. The segment at 330–458 (AAAGGVAGGS…SSGAASPSST (129 aa)) is disordered. Low complexity-rich tracts occupy residues 341–404 (GSAS…HGSN) and 413–424 (SVSNVSPSKSSS). Residues 430–442 (AATSMGASPSSVG) are compositionally biased toward polar residues. Over residues 445 to 458 (GPSKSSGAASPSST) the composition is skewed to low complexity. Residue G463 is the site of GPI-anchor amidated glycine attachment. A propeptide spans 464 to 486 (AATSVSAPVVHVVLLALMMVIAA) (removed in mature form).

Belongs to the glycosyl hydrolase 17 family. Post-translationally, the GPI-anchor is attached to the protein in the endoplasmic reticulum and serves to target the protein to the cell surface. There, the glucosamine-inositol phospholipid moiety is cleaved off and the GPI-modified mannoprotein is covalently attached via its lipidless GPI glycan remnant to the 1,6-beta-glucan of the outer cell wall layer.

It is found in the cell membrane. The protein localises to the secreted. Its subcellular location is the cell wall. The enzyme catalyses Hydrolysis of (1-&gt;3)-beta-D-glucosidic linkages in (1-&gt;3)-beta-D-glucans.. In terms of biological role, glucanases play a role in cell expansion during growth, in cell-cell fusion during mating, and in spore release during sporulation. This enzyme may be involved in beta-glucan degradation and also function biosynthetically as a transglycosylase. The protein is Probable glucan endo-1,3-beta-glucosidase eglC (eglC) of Aspergillus terreus (strain NIH 2624 / FGSC A1156).